A 535-amino-acid chain; its full sequence is Bifunctional purine biosynthesis protein PurH (535 aa).

The MGS-like domain occupies 6-151 (TRLPIRRALI…KNHKDVAIVV (146 aa)).

Belongs to the PurH family.

It carries out the reaction (6R)-10-formyltetrahydrofolate + 5-amino-1-(5-phospho-beta-D-ribosyl)imidazole-4-carboxamide = 5-formamido-1-(5-phospho-D-ribosyl)imidazole-4-carboxamide + (6S)-5,6,7,8-tetrahydrofolate. The enzyme catalyses IMP + H2O = 5-formamido-1-(5-phospho-D-ribosyl)imidazole-4-carboxamide. The protein operates within purine metabolism; IMP biosynthesis via de novo pathway; 5-formamido-1-(5-phospho-D-ribosyl)imidazole-4-carboxamide from 5-amino-1-(5-phospho-D-ribosyl)imidazole-4-carboxamide (10-formyl THF route): step 1/1. It functions in the pathway purine metabolism; IMP biosynthesis via de novo pathway; IMP from 5-formamido-1-(5-phospho-D-ribosyl)imidazole-4-carboxamide: step 1/1. In Pseudomonas fluorescens (strain ATCC BAA-477 / NRRL B-23932 / Pf-5), this protein is Bifunctional purine biosynthesis protein PurH.